The chain runs to 310 residues: MTAQTQELTKAQQYNFNKLQKRIRRNTGQAIADFNMIEDGDRIMVCLSGGKDSFTMLDILMSLQKSAPISFELVAVNLDQKQPGFPEHVLPEYLDSLGVEYKIVEEDTYSIVQDKVPEGKTTCALCSRLRRGILYRTAKELGATKIALGHHRDDILETLFLNMFYGGKMKGMPPKLVSDNGEHVVIRPLAYCREKDIIKYSDMRGYPIIPCNLCGSQPNLQRQAVKQMLNDWDKRFPGRIETMFRAMQNVVPSHLADFSLFDFKSIDKNSGVINGGDIGFDKEEIAPQVVEDEDLVMEFDPSLQLNVTNI.

Residues 48–53 (SGGKDS) carry the PP-loop motif motif. Residues Cys123, Cys126, and Cys214 each coordinate [4Fe-4S] cluster.

Belongs to the TtcA family. In terms of assembly, homodimer. It depends on Mg(2+) as a cofactor. [4Fe-4S] cluster is required as a cofactor.

It is found in the cytoplasm. It catalyses the reaction cytidine(32) in tRNA + S-sulfanyl-L-cysteinyl-[cysteine desulfurase] + AH2 + ATP = 2-thiocytidine(32) in tRNA + L-cysteinyl-[cysteine desulfurase] + A + AMP + diphosphate + H(+). The protein operates within tRNA modification. Functionally, catalyzes the ATP-dependent 2-thiolation of cytidine in position 32 of tRNA, to form 2-thiocytidine (s(2)C32). The sulfur atoms are provided by the cysteine/cysteine desulfurase (IscS) system. This Vibrio cholerae serotype O1 (strain ATCC 39541 / Classical Ogawa 395 / O395) protein is tRNA-cytidine(32) 2-sulfurtransferase.